A 225-amino-acid chain; its full sequence is NAD(P)H-quinone oxidoreductase subunit K, chloroplastic (225 aa).

4 residues coordinate [4Fe-4S] cluster: Cys43, Cys44, Cys108, and Cys139.

Belongs to the complex I 20 kDa subunit family. NDH is composed of at least 16 different subunits, 5 of which are encoded in the nucleus. The cofactor is [4Fe-4S] cluster.

The protein resides in the plastid. Its subcellular location is the chloroplast thylakoid membrane. It carries out the reaction a plastoquinone + NADH + (n+1) H(+)(in) = a plastoquinol + NAD(+) + n H(+)(out). The catalysed reaction is a plastoquinone + NADPH + (n+1) H(+)(in) = a plastoquinol + NADP(+) + n H(+)(out). Its function is as follows. NDH shuttles electrons from NAD(P)H:plastoquinone, via FMN and iron-sulfur (Fe-S) centers, to quinones in the photosynthetic chain and possibly in a chloroplast respiratory chain. The immediate electron acceptor for the enzyme in this species is believed to be plastoquinone. Couples the redox reaction to proton translocation, and thus conserves the redox energy in a proton gradient. This Daucus carota (Wild carrot) protein is NAD(P)H-quinone oxidoreductase subunit K, chloroplastic.